The following is a 156-amino-acid chain: MGRSISVSFGLLVVFLSLSGTGADQDCLPGWSSHEGHCYKVFNLDKTWEDAEKFCTEQANSRHLVSIDSKKEANFVAELVSQNIKETRRTDFVWIGLRAEDKRQHCSSEWSDGSSINYQNWIEAESKKCLGLEKQTRYRKWVNLNCGQPYRFTCEI.

An N-terminal signal peptide occupies residues 1–23 (MGRSISVSFGLLVVFLSLSGTGA). Intrachain disulfides connect cysteine 27–cysteine 38, cysteine 55–cysteine 154, and cysteine 129–cysteine 146. The region spanning 34-155 (HEGHCYKVFN…CGQPYRFTCE (122 aa)) is the C-type lectin domain.

It belongs to the snaclec family. Heterodimer; disulfide-linked. In terms of tissue distribution, expressed by the venom gland.

It is found in the secreted. Its function is as follows. Interferes with one step of hemostasis (modulation of platelet aggregation, or coagulation cascade, for example). This is Snaclec A3 from Macrovipera lebetinus (Levantine viper).